The chain runs to 341 residues: Serpentine receptor class beta-3 (341 aa).

The Extracellular segment spans residues 1 to 23 (MLETNDSVCELAYQLAYHPVYRS). N-linked (GlcNAc...) asparagine glycosylation occurs at Asn-5. The helical transmembrane segment at 24–44 (SQFWSMLVSSLSIPALIYFIT) threads the bilayer. Topologically, residues 45 to 58 (RKIFFLHFHGNLKC) are cytoplasmic. The chain crosses the membrane as a helical span at residues 59 to 79 (LLIVYFICNLLFSMALCFAFF). At 80 to 103 (YQFLIPFFVTSKCQLLINTTLFKW) the chain is on the extracellular side. An N-linked (GlcNAc...) asparagine glycan is attached at Asn-97. The chain crosses the membrane as a helical span at residues 104 to 124 (GQICSFLLLTSSMLLPIGFSI). The Cytoplasmic portion of the chain corresponds to 125 to 141 (ERFVALGNAQKYESSRT). A helical transmembrane segment spans residues 142–162 (FLGPVIIFIIIAVDFSIIFSV). At 163–187 (YKNEPFTEGFYSFILVPSTTASQIN) the chain is on the extracellular side. A helical transmembrane segment spans residues 188 to 208 (MYFFVLLFVKIFNLLLNCILL). Residues 209 to 237 (RIHKKIRIKYYSLSVRYEMEEILQSSKFT) are Cytoplasmic-facing. The helical transmembrane segment at 238–258 (FIIRFTHLLFFGFYVVVILFV) threads the bilayer. Residues 259–276 (RIMGESFFNGTLNYSVAR) lie on the Extracellular side of the membrane. N-linked (GlcNAc...) asparagine glycans are attached at residues Asn-267 and Asn-271. The helical transmembrane segment at 277–297 (GVFCTVPTYNLIIVIIGIKSL) threads the bilayer. Topologically, residues 298 to 341 (RHLNLQRLNKVQSTVQIKSTGKEGSKNYEDIITNYWDSVSSRTP) are cytoplasmic.

It belongs to the nematode receptor-like protein srb family. As to expression, expressed throughout the head.

It is found in the cell membrane. It localises to the perikaryon. The protein localises to the cell projection. The protein resides in the dendrite. In terms of biological role, G-protein coupled receptor. The polypeptide is Serpentine receptor class beta-3 (Caenorhabditis elegans).